Here is a 181-residue protein sequence, read N- to C-terminus: 6,7-dimethyl-8-ribityllumazine synthase (181 aa).

Residues Y27, 58-60, and 87-89 contribute to the 5-amino-6-(D-ribitylamino)uracil site; these read ALE and CVI. Residue 92–93 coordinates (2S)-2-hydroxy-3-oxobutyl phosphate; that stretch reads ET. H95 functions as the Proton donor in the catalytic mechanism. Residue N120 participates in 5-amino-6-(D-ribitylamino)uracil binding. Residue R134 participates in (2S)-2-hydroxy-3-oxobutyl phosphate binding.

Belongs to the DMRL synthase family.

It carries out the reaction (2S)-2-hydroxy-3-oxobutyl phosphate + 5-amino-6-(D-ribitylamino)uracil = 6,7-dimethyl-8-(1-D-ribityl)lumazine + phosphate + 2 H2O + H(+). It functions in the pathway cofactor biosynthesis; riboflavin biosynthesis; riboflavin from 2-hydroxy-3-oxobutyl phosphate and 5-amino-6-(D-ribitylamino)uracil: step 1/2. In terms of biological role, catalyzes the formation of 6,7-dimethyl-8-ribityllumazine by condensation of 5-amino-6-(D-ribitylamino)uracil with 3,4-dihydroxy-2-butanone 4-phosphate. This is the penultimate step in the biosynthesis of riboflavin. The polypeptide is 6,7-dimethyl-8-ribityllumazine synthase (Methylobacterium sp. (strain 4-46)).